A 206-amino-acid polypeptide reads, in one-letter code: Triafestin-1 (206 aa).

The signal sequence occupies residues 1–18 (MKTILAVIFFGILAFAFA). Residue Asn55 is glycosylated (N-linked (GlcNAc...) asparagine).

The protein belongs to the calycin superfamily. Triabin family. As to quaternary structure, interacts with host coagulation factor XII (F12) (inactive and activated) (via amino acids 1-77). Interacts with host high molecular weight kininogen (KNG1) (via amino acids 402-532). Salivary gland (at protein level).

Its subcellular location is the secreted. With respect to regulation, zn(2+) modulates binding to host coagulation factor XII (F12) and high molecular weight kininogen (KNG1). In terms of biological role, suppresses activation of the host plasma kallikrein-kinin system, leading to inhibition of the intrinsic coagulation pathway. Blocks host coagulation factor XII (F12) and prekallikrein (KLKB1) reciprocal activation without affecting their amidolytic activities. Blocks binding of host F12 and high molecular weight kininogen (KNG1) to negatively charged surfaces. Attenuates generation of bradykinin by interfering with activation of host kallikrein-kinin system. This is Triafestin-1 from Triatoma infestans (Assassin bug).